The following is a 544-amino-acid chain: Membrane protein insertase YidC (544 aa).

Residues 29-58 (TPKADPSATTQTLNPTSSESEDYVPTSSDS) form a disordered region. Residues 35-46 (SATTQTLNPTSS) show a composition bias toward polar residues. The next 3 helical transmembrane spans lie at 341 to 361 (FVLLKWLHSILGNWGVAIIAI), 421 to 441 (GGCFPILLQMPIFLALFYVFL), and 499 to 519 (PVIFSVFFLWFPSGLVLYWLV).

This sequence belongs to the OXA1/ALB3/YidC family. Type 1 subfamily. Interacts with the Sec translocase complex via SecD. Specifically interacts with transmembrane segments of nascent integral membrane proteins during membrane integration.

The protein localises to the cell inner membrane. Its function is as follows. Required for the insertion and/or proper folding and/or complex formation of integral membrane proteins into the membrane. Involved in integration of membrane proteins that insert both dependently and independently of the Sec translocase complex, as well as at least some lipoproteins. Aids folding of multispanning membrane proteins. This is Membrane protein insertase YidC from Pseudoalteromonas translucida (strain TAC 125).